The chain runs to 48 residues: MAGLKRKFNKGHAFTSKCVSLVKEQRARLYILRRCATMLCCWYIHGDE.

A required for DVL/RTFL small polypeptide activity region spans residues 13 to 44 (AFTSKCVSLVKEQRARLYILRRCATMLCCWYI). Residues 25-42 (QRARLYILRRCATMLCCW) form a helical membrane-spanning segment.

It belongs to the DVL/RTFL small polypeptides family.

Its subcellular location is the cell membrane. Its function is as follows. Small polypeptide acting as a regulatory molecule which coordinates cellular responses required for differentiation, growth and development, probably by restricting polar cell proliferation in lateral organs and coordinating socket cell recruitment and differentiation at trichome sites. The chain is Small polypeptide DEVIL 19 from Arabidopsis thaliana (Mouse-ear cress).